The following is a 356-amino-acid chain: Probable methyltransferase-like protein 15 homolog (356 aa).

S-adenosyl-L-methionine is bound by residues 55-57 (GGH), aspartate 74, phenylalanine 103, aspartate 126, and glutamine 133.

This sequence belongs to the methyltransferase superfamily. RsmH family.

Its function is as follows. Probable S-adenosyl-L-methionine-dependent methyltransferase. The sequence is that of Probable methyltransferase-like protein 15 homolog from Drosophila melanogaster (Fruit fly).